The primary structure comprises 337 residues: Interferon gamma receptor 2 (337 aa).

The first 21 residues, 1–21, serve as a signal peptide directing secretion; that stretch reads MRPTLLWSLLLLLGVFAAAAA. Residues 28–247 are Extracellular-facing; it reads SQLPAPQHPK…MADASTELQQ (220 aa). In terms of domain architecture, Fibronectin type-III 1 spans 31 to 129; that stretch reads PAPQHPKIRL…GALHSAWVTM (99 aa). 2 N-linked (GlcNAc...) asparagine glycosylation sites follow: asparagine 56 and asparagine 85. A disulfide bond links cysteine 86 and cysteine 94. Residues asparagine 110, asparagine 137, asparagine 219, and asparagine 231 are each glycosylated (N-linked (GlcNAc...) asparagine). Residues 142–240 enclose the Fibronectin type-III 2 domain; sequence PPENIEVTPG…NISCYETMAD (99 aa). The cysteines at positions 209 and 234 are disulfide-linked. The helical transmembrane segment at 248 to 268 threads the bilayer; sequence VILISVGTFSLLSVLAGACFF. Residues 269–337 are Cytoplasmic-facing; that stretch reads LVLKYRGLIK…KEQEDVLQTL (69 aa). The Dileucine internalization motif signature appears at 276–277; that stretch reads LI.

It belongs to the type II cytokine receptor family. In terms of assembly, heterodimer with IFNGR1, to form the IFNG receptor complex. Interacts (via intracellular domain) with JAK2. Expressed in T-cells (at protein level).

The protein resides in the cell membrane. The protein localises to the cytoplasmic vesicle membrane. It is found in the golgi apparatus membrane. Its subcellular location is the endoplasmic reticulum membrane. It localises to the cytoplasm. In terms of biological role, associates with IFNGR1 to form a receptor for the cytokine interferon gamma (IFNG). Ligand binding stimulates activation of the JAK/STAT signaling pathway. Required for signal transduction in contrast to other receptor subunit responsible for ligand binding. The chain is Interferon gamma receptor 2 from Homo sapiens (Human).